The primary structure comprises 162 residues: MLDTWVWGTLTLTFGLLSSLQGVSFNETANTCDILNCPKGFTCCVKECCPERKVWDPANDRFRFLVILACIIFPILFICALVSLFCPNCTELQHDVRRVDHQTPIEPPSIAPLESIWVTSLDPPPPYSQVVQMTPPTEPPPPYSLRPEGPAGQMRGRAYATL.

The N-terminal stretch at 1–22 (MLDTWVWGTLTLTFGLLSSLQG) is a signal peptide. Over 23–63 (VSFNETANTCDILNCPKGFTCCVKECCPERKVWDPANDRFR) the chain is Extracellular. The chain crosses the membrane as a helical span at residues 64 to 84 (FLVILACIIFPILFICALVSL). At 85–162 (FCPNCTELQH…QMRGRAYATL (78 aa)) the chain is on the cytoplasmic side. Positions 134–162 (TPPTEPPPPYSLRPEGPAGQMRGRAYATL) are disordered.

It is found in the membrane. The sequence is that of Transmembrane protein 92 (Tmem92) from Mus musculus (Mouse).